Consider the following 493-residue polypeptide: Cysteine sulfinic acid decarboxylase (493 aa).

N6-(pyridoxal phosphate)lysine is present on Lys305.

It belongs to the group II decarboxylase family. As to quaternary structure, homodimer. It depends on pyridoxal 5'-phosphate as a cofactor. Expressed in kidney and liver not detected in lymphoid tissues and lung. Expressed in kidney, liver and brain. 7 and 4 times higher expression in kidney and liver than in brain, respectively. Low level of detection in skeletal muscle. Expressed in brain, olfactory bulb, liver, skeletal muscle and kidney with the highest expression in liver and lowest in skeletal muscle (at protein level).

It carries out the reaction L-aspartate + H(+) = beta-alanine + CO2. The enzyme catalyses 3-sulfino-L-alanine + H(+) = hypotaurine + CO2. It catalyses the reaction L-cysteate + H(+) = taurine + CO2. It participates in organosulfur biosynthesis; taurine biosynthesis; hypotaurine from L-cysteine: step 2/2. Activated by Mn(2+). Inhibited by bis-carboxymethyl-trithiocarbonate, ethylxanthogenacetic acid and 2,5-disulfoaniline. Not affected by Li(+) within 0.05-40 mM concentration range. Its function is as follows. Catalyzes the decarboxylation of L-aspartate, 3-sulfino-L-alanine (cysteine sulfinic acid), and L-cysteate to beta-alanine, hypotaurine and taurine, respectively. The preferred substrate is 3-sulfino-L-alanine. Does not exhibit any decarboxylation activity toward glutamate. This is Cysteine sulfinic acid decarboxylase from Mus musculus (Mouse).